The following is a 911-amino-acid chain: Isoleucine--tRNA ligase (911 aa).

Positions P57–H67 match the 'HIGH' region motif. L-isoleucyl-5'-AMP is bound at residue E564. Positions K605–S609 match the 'KMSKS' region motif. K608 provides a ligand contact to ATP. Zn(2+) contacts are provided by C887, C890, C902, and C905.

Belongs to the class-I aminoacyl-tRNA synthetase family. IleS type 1 subfamily. As to quaternary structure, monomer. Zn(2+) serves as cofactor.

It localises to the cytoplasm. The enzyme catalyses tRNA(Ile) + L-isoleucine + ATP = L-isoleucyl-tRNA(Ile) + AMP + diphosphate. Its function is as follows. Catalyzes the attachment of isoleucine to tRNA(Ile). As IleRS can inadvertently accommodate and process structurally similar amino acids such as valine, to avoid such errors it has two additional distinct tRNA(Ile)-dependent editing activities. One activity is designated as 'pretransfer' editing and involves the hydrolysis of activated Val-AMP. The other activity is designated 'posttransfer' editing and involves deacylation of mischarged Val-tRNA(Ile). This is Isoleucine--tRNA ligase from Nautilia profundicola (strain ATCC BAA-1463 / DSM 18972 / AmH).